Here is a 361-residue protein sequence, read N- to C-terminus: Chorismate synthase (361 aa).

The NADP(+) site is built by R48 and R54. Residues 125–127, 240–241, G286, 301–305, and R327 each bind FMN; these read RSS, NA, and KPTSS.

It belongs to the chorismate synthase family. In terms of assembly, homotetramer. Requires FMNH2 as cofactor.

The enzyme catalyses 5-O-(1-carboxyvinyl)-3-phosphoshikimate = chorismate + phosphate. It participates in metabolic intermediate biosynthesis; chorismate biosynthesis; chorismate from D-erythrose 4-phosphate and phosphoenolpyruvate: step 7/7. Catalyzes the anti-1,4-elimination of the C-3 phosphate and the C-6 proR hydrogen from 5-enolpyruvylshikimate-3-phosphate (EPSP) to yield chorismate, which is the branch point compound that serves as the starting substrate for the three terminal pathways of aromatic amino acid biosynthesis. This reaction introduces a second double bond into the aromatic ring system. This is Chorismate synthase from Magnetococcus marinus (strain ATCC BAA-1437 / JCM 17883 / MC-1).